We begin with the raw amino-acid sequence, 132 residues long: Phosphomevalonate dehydratase small subunit (132 aa).

Ser62 acts as the Proton acceptor in catalysis.

The protein belongs to the AcnX type II small subunit family. Heterodimer composed of a large subunit (PMDh-L) and a small subunit (PMDh-S).

It catalyses the reaction (R)-5-phosphomevalonate = (2E)-3-methyl-5-phosphooxypent-2-enoate + H2O. It functions in the pathway isoprenoid biosynthesis; isopentenyl diphosphate biosynthesis via mevalonate pathway. Component of a hydro-lyase that catalyzes the dehydration of mevalonate 5-phosphate (MVA5P) to form trans-anhydromevalonate 5-phosphate (tAHMP). Involved in the archaeal mevalonate (MVA) pathway, which provides fundamental precursors for isoprenoid biosynthesis, such as isopentenyl diphosphate (IPP) and dimethylallyl diphosphate (DMAPP). The polypeptide is Phosphomevalonate dehydratase small subunit (Methanocella arvoryzae (strain DSM 22066 / NBRC 105507 / MRE50)).